The chain runs to 136 residues: uncharacterized protein (136 aa).

Residues 1–51 (MAANATSGRPPSIALRQPEATGWRRGIPAKVATKGTQAEREGDVRSGGRAR) are disordered. A compositionally biased stretch (basic and acidic residues) spans 37 to 46 (QAEREGDVRS).

This is an uncharacterized protein from Homo sapiens (Human).